The sequence spans 701 residues: Ribosomal RNA large subunit methyltransferase K/L (701 aa).

A THUMP domain is found at 43–154 (LLYQSLMWSR…KETAHISLDL (112 aa)).

It belongs to the methyltransferase superfamily. RlmKL family.

It localises to the cytoplasm. It carries out the reaction guanosine(2445) in 23S rRNA + S-adenosyl-L-methionine = N(2)-methylguanosine(2445) in 23S rRNA + S-adenosyl-L-homocysteine + H(+). The enzyme catalyses guanosine(2069) in 23S rRNA + S-adenosyl-L-methionine = N(2)-methylguanosine(2069) in 23S rRNA + S-adenosyl-L-homocysteine + H(+). In terms of biological role, specifically methylates the guanine in position 2445 (m2G2445) and the guanine in position 2069 (m7G2069) of 23S rRNA. The protein is Ribosomal RNA large subunit methyltransferase K/L of Klebsiella pneumoniae (strain 342).